A 271-amino-acid chain; its full sequence is Aquaporin-1 (271 aa).

Residues 1 to 11 lie on the Cytoplasmic side of the membrane; the sequence is MASEFKKKIFW. Residues 12–29 traverse the membrane as a helical segment; sequence RAVVAEFLAMTLFIFISI. The Extracellular portion of the chain corresponds to 30-48; the sequence is GSALGFQYPVRNNQTSGAA. An N-linked (GlcNAc...) asparagine glycan is attached at Asn42. Residues 49-67 traverse the membrane as a helical segment; the sequence is QDNVKVSLAFGLSIATLAQ. Residues 68 to 70 are Cytoplasmic-facing; it reads SVG. The stretch at 71-84 is an intramembrane region; it reads HISGAHLNPAVTLG. Positions 78–80 match the NPA 1 motif; it reads NPA. Residues 85-92 lie on the Cytoplasmic side of the membrane; that stretch reads LLLSCQIS. The helical transmembrane segment at 93–111 threads the bilayer; that stretch reads VLRAVMYIIAQCVGAIVAT. Residues 112 to 135 are Extracellular-facing; the sequence is AILSGITSSLPGNSLGLNSLAPGV. A helical transmembrane segment spans residues 136 to 155; that stretch reads DSGQGLGIEIIGTLQLVLCV. Residues 156 to 165 are Cytoplasmic-facing; it reads LATTDRRRRD. A helical transmembrane segment spans residues 166–183; it reads LGGSAPLAIGFSVALGHL. Residues 184-188 are Extracellular-facing; that stretch reads LAIDY. The stretch at 189–201 is an intramembrane region; sequence TGCGINPARSFGS. The NPA 2 signature appears at 194–196; that stretch reads NPA. At 202–208 the chain is on the extracellular side; it reads AVITHNF. The helical transmembrane segment at 209–226 threads the bilayer; sequence QDHWVFWVGPFIGGALAV. The Cytoplasmic portion of the chain corresponds to 227–271; that stretch reads LIYDFILAPRSSDLTDRVKVWTSGQVEEYDLDGDDINSRVEMKPK. Ser249 is modified (phosphoserine). Position 255 is a phosphotyrosine (Tyr255). Ser264 bears the Phosphoserine mark.

This sequence belongs to the MIP/aquaporin (TC 1.A.8) family. As to quaternary structure, homotetramer; each monomer provides an independent water pore. Component of the ankyrin-1 complex in the erythrocyte, composed of ANK1, RHCE, RHAG, SLC4A1, EPB42, GYPA, GYPB and AQP1. Interacts with EPHB2; involved in endolymph production in the inner ear. Identified in a complex with STOM. Interacts (via the N-terminal) with ANK1 (via ANK 1-5 repeats). Interacts (via the C-terminal) with EPB42.

Its subcellular location is the cell membrane. The enzyme catalyses H2O(in) = H2O(out). It catalyses the reaction nitric oxide(out) = nitric oxide(in). The catalysed reaction is CO2(out) = CO2(in). It carries out the reaction glycerol(in) = glycerol(out). The enzyme catalyses H2O2(out) = H2O2(in). It catalyses the reaction K(+)(in) = K(+)(out). The catalysed reaction is Na(+)(in) = Na(+)(out). Forms a water channel that facilitates the transport of water across cell membranes, playing a crucial role in water homeostasis in various tissues. Could also be permeable to small solutes including hydrogen peroxide, glycerol and gases such as amonnia (NH3), nitric oxide (NO) and carbon dioxide (CO2). Recruited to the ankyrin-1 complex, a multiprotein complex of the erythrocyte membrane, it could be part of a CO2 metabolon, linking facilitated diffusion of CO2 across the membrane, anion exchange of Cl(-)/HCO3(-) and interconversion of dissolved CO2 and carbonic acid in the cytosol. In vitro, it shows non-selective gated cation channel activity and may be permeable to cations like K(+) and Na(+) in vivo. This is Aquaporin-1 from Sus scrofa (Pig).